A 165-amino-acid polypeptide reads, in one-letter code: Endoribonuclease YbeY (165 aa).

The Zn(2+) site is built by histidine 131, histidine 135, and histidine 141.

This sequence belongs to the endoribonuclease YbeY family. Zn(2+) is required as a cofactor.

It is found in the cytoplasm. Single strand-specific metallo-endoribonuclease involved in late-stage 70S ribosome quality control and in maturation of the 3' terminus of the 16S rRNA. The polypeptide is Endoribonuclease YbeY (Agathobacter rectalis (strain ATCC 33656 / DSM 3377 / JCM 17463 / KCTC 5835 / VPI 0990) (Eubacterium rectale)).